We begin with the raw amino-acid sequence, 236 residues long: Small ribosomal subunit protein uS2c (236 aa).

It belongs to the universal ribosomal protein uS2 family.

It is found in the plastid. It localises to the chloroplast. The sequence is that of Small ribosomal subunit protein uS2c (rps2) from Saccharum hybrid (Sugarcane).